Consider the following 92-residue polypeptide: Small ribosomal subunit protein uS19 (92 aa).

This sequence belongs to the universal ribosomal protein uS19 family.

Functionally, protein S19 forms a complex with S13 that binds strongly to the 16S ribosomal RNA. This is Small ribosomal subunit protein uS19 from Legionella pneumophila (strain Paris).